Consider the following 523-residue polypeptide: NEDD8-activating enzyme E1 regulatory subunit AXL (523 aa).

Belongs to the ubiquitin-activating E1 family. ULA1 subfamily. As to quaternary structure, heterodimer of ECR1 and AXL1. The complex binds to RUB1/NEDD8 and RCE1.

It localises to the nucleus. It participates in protein modification; protein neddylation. Functionally, regulatory subunit of the dimeric ECR1-AXL1 E1 enzyme. E1 activates RUB1/NEDD8 by first adenylating its C-terminal glycine residue with ATP, thereafter linking this residue to the side chain of the catalytic cysteine, yielding a RUB1-ECR1 thioester and free AMP. E1 finally transfers RUB1 to the catalytic cysteine of RCE1. May function redundantly with AXR1 in the RUB conjugating pathway. Seems not to be functionally equivalent to AXR1 in vivo. This Arabidopsis thaliana (Mouse-ear cress) protein is NEDD8-activating enzyme E1 regulatory subunit AXL.